Consider the following 307-residue polypeptide: UDP-N-acetylenolpyruvoylglucosamine reductase (307 aa).

Residues 34-197 form the FAD-binding PCMH-type domain; sequence VGGNAEALFR…LSASLKGRPG (164 aa). The active site involves Arg177. Ser226 acts as the Proton donor in catalysis. Glu296 is a catalytic residue.

The protein belongs to the MurB family. Requires FAD as cofactor.

The protein localises to the cytoplasm. The catalysed reaction is UDP-N-acetyl-alpha-D-muramate + NADP(+) = UDP-N-acetyl-3-O-(1-carboxyvinyl)-alpha-D-glucosamine + NADPH + H(+). Its pathway is cell wall biogenesis; peptidoglycan biosynthesis. Functionally, cell wall formation. The polypeptide is UDP-N-acetylenolpyruvoylglucosamine reductase (Paramagnetospirillum magneticum (strain ATCC 700264 / AMB-1) (Magnetospirillum magneticum)).